A 226-amino-acid chain; its full sequence is Ribose-5-phosphate isomerase A (226 aa).

Residues 28–31, 80–83, and 93–96 contribute to the substrate site; these read TGST, DGAD, and KGGG. The active-site Proton acceptor is the glutamate 102. Lysine 120 is a binding site for substrate.

The protein belongs to the ribose 5-phosphate isomerase family. Homodimer.

It catalyses the reaction aldehydo-D-ribose 5-phosphate = D-ribulose 5-phosphate. It functions in the pathway carbohydrate degradation; pentose phosphate pathway; D-ribose 5-phosphate from D-ribulose 5-phosphate (non-oxidative stage): step 1/1. Its function is as follows. Catalyzes the reversible conversion of ribose-5-phosphate to ribulose 5-phosphate. This chain is Ribose-5-phosphate isomerase A, found in Caulobacter sp. (strain K31).